The chain runs to 1134 residues: DNA damage-binding protein 1 (1134 aa).

This sequence belongs to the DDB1 family. Interacts with cdt-1 and cul-4. Expressed at high levels in the spermatheca of adult hermaphrodites.

The protein resides in the cytoplasm. It is found in the nucleus. It functions in the pathway protein modification; protein ubiquitination. Functionally, plays a role in DNA repair. May be a component of an E3 ubiquitin-protein ligase which promotes histone ubiquitination in response to UV irradiation. Histone ubiquitination may be important for subsequent DNA repair. Promotes the degradation of the replication licensing factor cdt-1 during S-phase, thereby preventing rereplication of DNA during a single round of cell division. This Caenorhabditis elegans protein is DNA damage-binding protein 1 (ddb-1).